The chain runs to 671 residues: DNA ligase (671 aa).

NAD(+)-binding positions include 32 to 36, 81 to 82, and E113; these read DAEYD and SL. Residue K115 is the N6-AMP-lysine intermediate of the active site. Positions 136, 173, 290, and 314 each coordinate NAD(+). Zn(2+) is bound by residues C408, C411, C426, and C432. Positions 593–671 constitute a BRCT domain; the sequence is EIDSPFAGKT…EAEMLRLLGS (79 aa).

Belongs to the NAD-dependent DNA ligase family. LigA subfamily. The cofactor is Mg(2+). It depends on Mn(2+) as a cofactor.

The enzyme catalyses NAD(+) + (deoxyribonucleotide)n-3'-hydroxyl + 5'-phospho-(deoxyribonucleotide)m = (deoxyribonucleotide)n+m + AMP + beta-nicotinamide D-nucleotide.. Functionally, DNA ligase that catalyzes the formation of phosphodiester linkages between 5'-phosphoryl and 3'-hydroxyl groups in double-stranded DNA using NAD as a coenzyme and as the energy source for the reaction. It is essential for DNA replication and repair of damaged DNA. The protein is DNA ligase of Escherichia coli O9:H4 (strain HS).